Consider the following 91-residue polypeptide: Small ribosomal subunit protein uS19 (91 aa).

The protein belongs to the universal ribosomal protein uS19 family.

Protein S19 forms a complex with S13 that binds strongly to the 16S ribosomal RNA. In Aliarcobacter butzleri (strain RM4018) (Arcobacter butzleri), this protein is Small ribosomal subunit protein uS19.